The primary structure comprises 335 residues: MAKAKIAVNGYGTIGKRVADAAQAQDDMEIIGISKTKPNYEAAVAHQLGYDIYAPAANLEAFEKAGMPAAGSIEEMVEKADVIVDCTPGGIGKSNKALYEKAGVKAIWQGGEDHELAGYSFNAVANYEGALGLDFVRVVSCNTTGLCRVIYPIDKAFGTKKVRVTLARRATDPNDIKKGPINAIVPDPIKLPSHHGPDVKTVIPHIDITSAAMKIPTTLMHVHTVNMELKNECTAEDVRQVLGSQSRVRFVGQGITSTAEIMEVARDIKRPRNDMWENCVWPDSITMHEGELYFFQAIHQESIVVPENVDAIRAMMELESDGAKSILKTNKAIGL.

Residues 13-14 and Gly-111 each bind NAD(+); that span reads TI. 140 to 142 is a binding site for D-glyceraldehyde 3-phosphate; the sequence is SCN. Cys-141 functions as the Nucleophile in the catalytic mechanism. Position 169 (Arg-169) interacts with NAD(+). D-glyceraldehyde 3-phosphate is bound by residues Thr-171 and 195–196; that span reads HG. Gln-300 serves as a coordination point for NAD(+).

This sequence belongs to the glyceraldehyde-3-phosphate dehydrogenase family. Homotetramer.

The protein resides in the cytoplasm. It carries out the reaction D-glyceraldehyde 3-phosphate + phosphate + NADP(+) = (2R)-3-phospho-glyceroyl phosphate + NADPH + H(+). It catalyses the reaction D-glyceraldehyde 3-phosphate + phosphate + NAD(+) = (2R)-3-phospho-glyceroyl phosphate + NADH + H(+). It participates in carbohydrate degradation; glycolysis; pyruvate from D-glyceraldehyde 3-phosphate: step 1/5. The chain is Glyceraldehyde-3-phosphate dehydrogenase 2 (gapB) from Methanosarcina acetivorans (strain ATCC 35395 / DSM 2834 / JCM 12185 / C2A).